The sequence spans 282 residues: Centromere protein P (282 aa).

Residues 1–80 (MEQKYEEDIQ…KDLRRQTEIN (80 aa)) adopt a coiled-coil conformation.

This sequence belongs to the CENP-P/CTF19 family.

It localises to the nucleus. Its subcellular location is the chromosome. The protein localises to the centromere. Probable component of a centromeric complex involved in assembly of kinetochore proteins, mitotic progression and chromosome segregation. In Danio rerio (Zebrafish), this protein is Centromere protein P (cenpp).